Here is a 182-residue protein sequence, read N- to C-terminus: Adenine phosphoribosyltransferase (182 aa).

The protein belongs to the purine/pyrimidine phosphoribosyltransferase family. As to quaternary structure, homodimer.

It localises to the cytoplasm. The enzyme catalyses AMP + diphosphate = 5-phospho-alpha-D-ribose 1-diphosphate + adenine. Its pathway is purine metabolism; AMP biosynthesis via salvage pathway; AMP from adenine: step 1/1. In terms of biological role, catalyzes a salvage reaction resulting in the formation of AMP, that is energically less costly than de novo synthesis. The protein is Adenine phosphoribosyltransferase of Sulfurimonas denitrificans (strain ATCC 33889 / DSM 1251) (Thiomicrospira denitrificans (strain ATCC 33889 / DSM 1251)).